Consider the following 449-residue polypeptide: Plasmepsin IV (449 aa).

The Cytoplasmic portion of the chain corresponds to 1 to 37; it reads MALTVKEEEFSNTLIKNASAFDRLKLGNLKNLKIQKK. Residues 1–121 constitute a propeptide that is removed on maturation; that stretch reads MALTVKEEEF…SGYAQKGYLG (121 aa). A helical; Signal-anchor for type II membrane protein membrane pass occupies residues 38-58; sequence LQFLYLILFVLITGVFFFFLI. Residues 59–449 are Lumenal-facing; sequence GNFYSHRKLY…SVGFAVAKNL (391 aa). The Peptidase A1 domain occupies 137-444; the sequence is FYGEGQIGTN…DYEKESVGFA (308 aa). D155 is an active-site residue. A disulfide bond links C168 and C173. Residue D335 is part of the active site. Residues C370 and C406 are joined by a disulfide bond.

The protein belongs to the peptidase A1 family. In terms of assembly, component of the hemozoin formation complex (HFC) composed of falcipains FP2A and/or FP2B, plasmepsins PMII, PMIII/HAP and PMIV, heme detoxifying protein HDP and falcilysin FLN. The HFC complex is involved in hemoglobin degradation and detoxification of heme in the food vacuole during the asexual blood stage. In terms of processing, proteolytically cleaved into the soluble active mature form by cysteine proteases in the digestive vacuole of trophozoites. Proteolysis requires an acidic environment. Autoprocessing or transprocessing by other plasmepsins such as PMII may serve as an alternate activation system.

The protein localises to the membrane. It localises to the vacuole lumen. It catalyses the reaction Hydrolysis of the bonds linking certain hydrophobic residues in hemoglobin or globin. Also cleaves small molecules substrates such as Ala-Leu-Glu-Arg-Thr-Phe-|-Phe(NO2)-Ser-Phe-Pro-Thr.. Inhibited by pepstatin A. In terms of biological role, during the asexual blood stage, catalyzes the cleavage of denatured host hemoglobin (Hb) or globins. Digestion of host Hb is an essential step which provides the parasite with amino acids for protein synthesis, and regulates osmolarity. This chain is Plasmepsin IV, found in Plasmodium falciparum (isolate HB3).